A 397-amino-acid chain; its full sequence is Decapping and exoribonuclease protein (397 aa).

Residues arginine 58, glutamate 101, and tryptophan 131–glycine 133 contribute to the substrate site. Glutamate 192 contributes to the Mg(2+) binding site. Positions 217 and 234 each coordinate substrate. The Mg(2+) site is built by glutamate 234, aspartate 236, glutamate 253, and leucine 254. Lysine 255 and glutamine 280 together coordinate substrate. Residue threonine 392 is modified to Phosphothreonine. Serine 394 is subject to Phosphoserine.

The protein belongs to the DXO/Dom3Z family. Mg(2+) is required as a cofactor.

Its subcellular location is the nucleus. It catalyses the reaction a 5'-end triphospho-ribonucleoside in mRNA + H2O = a 5'-end phospho-ribonucleoside in mRNA + diphosphate + H(+). The catalysed reaction is a 5'-end NAD(+)-phospho-ribonucleoside in mRNA + H2O = a 5'-end phospho-ribonucleoside in mRNA + NAD(+) + H(+). It carries out the reaction a 5'-end NAD(+)-phospho-ribonucleoside in snoRNA + H2O = a 5'-end phospho-ribonucleoside in snoRNA + NAD(+) + H(+). The enzyme catalyses a 5'-end (N(7)-methyl 5'-triphosphoguanosine)-ribonucleoside-ribonucleotide in mRNA + H2O = a (N(7)-methyl 5'-triphosphoguanosine)-nucleoside + a 5'-end phospho-ribonucleoside in mRNA + H(+). It catalyses the reaction a 5'-end FAD-phospho-ribonucleoside in mRNA + H2O = a 5'-end phospho-ribonucleoside in mRNA + FAD + H(+). The catalysed reaction is a 5'-end CoA-ribonucleoside in mRNA + H2O = 3'-dephospho-CoA + a 5'-end phospho-ribonucleoside in mRNA + H(+). Functionally, decapping enzyme for NAD-capped RNAs: specifically hydrolyzes the nicotinamide adenine dinucleotide (NAD) cap from a subset of RNAs by removing the entire NAD moiety from the 5'-end of an NAD-capped RNA. The NAD-cap is present at the 5'-end of some RNAs and snoRNAs. In contrast to the canonical 5'-end N7 methylguanosine (m7G) cap, the NAD cap promotes mRNA decay. Preferentially acts on NAD-capped transcripts in response to environmental stress. Also acts as a non-canonical decapping enzyme that removes the entire cap structure of m7G capped or incompletely capped RNAs and mediates their subsequent degradation. Specifically degrades pre-mRNAs with a defective 5'-end m7G cap and is part of a pre-mRNA capping quality control. Has decapping activity toward incomplete 5'-end m7G cap mRNAs such as unmethylated 5'-end-capped RNA (cap0), while it has no activity toward 2'-O-ribose methylated m7G cap (cap1). In contrast to canonical decapping enzymes DCP2 and NUDT16, which cleave the cap within the triphosphate linkage, the decapping activity releases the entire cap structure GpppN and a 5'-end monophosphate RNA. Also has 5'-3' exoribonuclease activities: The 5'-end monophosphate RNA is then degraded by the 5'-3' exoribonuclease activity, enabling this enzyme to decap and degrade incompletely capped mRNAs. Also possesses RNA 5'-pyrophosphohydrolase activity by hydrolyzing the 5'-end triphosphate to release pyrophosphates. Exhibits decapping activity towards FAD-capped RNAs. Exhibits decapping activity towards dpCoA-capped RNAs in vitro. The polypeptide is Decapping and exoribonuclease protein (Rattus norvegicus (Rat)).